Consider the following 229-residue polypeptide: Stage III sporulation protein AG (229 aa).

The chain crosses the membrane as a helical span at residues 30–50 (YHYFLFVFVLGVSFMLVSQLF). 2 disordered regions span residues 64-93 (AVSS…KDSI) and 136-159 (SNKN…DQSS). A compositionally biased stretch (basic and acidic residues) spans 71-93 (ADSKEKTAEVFKASKSDKPKDSI).

The protein localises to the cell membrane. The polypeptide is Stage III sporulation protein AG (spoIIIAG) (Bacillus subtilis (strain 168)).